The chain runs to 122 residues: Large ribosomal subunit protein uL14 (122 aa).

It belongs to the universal ribosomal protein uL14 family. As to quaternary structure, part of the 50S ribosomal subunit. Forms a cluster with proteins L3 and L19. In the 70S ribosome, L14 and L19 interact and together make contacts with the 16S rRNA in bridges B5 and B8.

In terms of biological role, binds to 23S rRNA. Forms part of two intersubunit bridges in the 70S ribosome. The sequence is that of Large ribosomal subunit protein uL14 from Ruminiclostridium cellulolyticum (strain ATCC 35319 / DSM 5812 / JCM 6584 / H10) (Clostridium cellulolyticum).